The chain runs to 430 residues: Glutamate-1-semialdehyde 2,1-aminomutase (430 aa).

K267 carries the N6-(pyridoxal phosphate)lysine modification.

Belongs to the class-III pyridoxal-phosphate-dependent aminotransferase family. HemL subfamily. In terms of assembly, homodimer. Pyridoxal 5'-phosphate serves as cofactor.

It is found in the cytoplasm. The catalysed reaction is (S)-4-amino-5-oxopentanoate = 5-aminolevulinate. It functions in the pathway porphyrin-containing compound metabolism; protoporphyrin-IX biosynthesis; 5-aminolevulinate from L-glutamyl-tRNA(Glu): step 2/2. This is Glutamate-1-semialdehyde 2,1-aminomutase from Desulfotalea psychrophila (strain LSv54 / DSM 12343).